We begin with the raw amino-acid sequence, 447 residues long: Phosphoglucosamine mutase (447 aa).

Ser-101 functions as the Phosphoserine intermediate in the catalytic mechanism. Ser-101, Asp-242, Asp-244, and Asp-246 together coordinate Mg(2+). Ser-101 carries the phosphoserine modification.

The protein belongs to the phosphohexose mutase family. It depends on Mg(2+) as a cofactor. Post-translationally, activated by phosphorylation.

It catalyses the reaction alpha-D-glucosamine 1-phosphate = D-glucosamine 6-phosphate. Functionally, catalyzes the conversion of glucosamine-6-phosphate to glucosamine-1-phosphate. The sequence is that of Phosphoglucosamine mutase from Azorhizobium caulinodans (strain ATCC 43989 / DSM 5975 / JCM 20966 / LMG 6465 / NBRC 14845 / NCIMB 13405 / ORS 571).